A 442-amino-acid chain; its full sequence is Terpene cyclase aneC (442 aa).

Mg(2+)-binding residues include D196, N327, S331, and E335. 2 residues coordinate (2E,6E)-farnesyl diphosphate: R419 and Y420.

This sequence belongs to the terpene synthase family. Homodimer. It depends on Mg(2+) as a cofactor.

It catalyses the reaction (2E,6E)-farnesyl diphosphate = dauca-4,7-diene + diphosphate. It participates in secondary metabolite biosynthesis. Terpene cyclase; part of the gene cluster that mediates the biosynthesis of aculenes, a unique type of norsesquiterpenes that contain a nordaucane skeleton linked to an L-proline moiety and are of mixed biosynthetic origin. The pathway begins with the synthesis of dauca-4,7-diene by the terpene cyclase aneC using farnesyl pyrophosphate (FPP) as substrate. The cytochrome P450 monooxygenase aneF then performs the initial oxidation at C-12 of dauca-4,7-diene to yield asperaculane D. Asperaculane D is substrate of the cytochrome P450 monooxygenase aneD for C-10 hydroxylation to yield asperaculane E. The cytochrome P450 monooxygenase aneG then converts asperaculane E into aculene D via C-2 oxidation. The monomodular nonribosomal peptide synthtase aneB adenylates L-proline and the thiohydrolase aneE transfers this activated L-proline derivative to aculenes D and C to produce respectively aculenes B and A. The dioxygenase aneA converts aculene D into aculene C, and aculene B into aculene A by introducing the 5,6-alkene moiety. Asperculanes A, B, C and F, as well as 14-prolyl asperculane C, might be shunt products of the pathway. This Aspergillus aculeatus (strain ATCC 16872 / CBS 172.66 / WB 5094) protein is Terpene cyclase aneC.